The primary structure comprises 161 residues: Cytochrome c-type biogenesis protein CcmE (161 aa).

The Cytoplasmic portion of the chain corresponds to 1–8 (MNPRRKKR). The chain crosses the membrane as a helical; Signal-anchor for type II membrane protein span at residues 9-29 (LGLILALFVGISATVGLMLYA). Residues 30-161 (LNQNMDLFYT…TEQQKQGTGQ (132 aa)) lie on the Periplasmic side of the membrane. H129 and Y133 together coordinate heme. Residues 142 to 161 (MKKTHEPLQYTEQQKQGTGQ) form a disordered region. Positions 151 to 161 (YTEQQKQGTGQ) are enriched in polar residues.

It belongs to the CcmE/CycJ family.

The protein localises to the cell inner membrane. Its function is as follows. Heme chaperone required for the biogenesis of c-type cytochromes. Transiently binds heme delivered by CcmC and transfers the heme to apo-cytochromes in a process facilitated by CcmF and CcmH. This is Cytochrome c-type biogenesis protein CcmE from Aliivibrio fischeri (strain MJ11) (Vibrio fischeri).